We begin with the raw amino-acid sequence, 313 residues long: tRNA dimethylallyltransferase 2 (313 aa).

16–23 (GPTASGKT) contacts ATP. 18–23 (TASGKT) is a substrate binding site. 2 interaction with substrate tRNA regions span residues 41-44 (DSRQ) and 161-165 (QRTIR).

It belongs to the IPP transferase family. As to quaternary structure, monomer. Mg(2+) serves as cofactor.

It carries out the reaction adenosine(37) in tRNA + dimethylallyl diphosphate = N(6)-dimethylallyladenosine(37) in tRNA + diphosphate. In terms of biological role, catalyzes the transfer of a dimethylallyl group onto the adenine at position 37 in tRNAs that read codons beginning with uridine, leading to the formation of N6-(dimethylallyl)adenosine (i(6)A). In Pelobacter propionicus (strain DSM 2379 / NBRC 103807 / OttBd1), this protein is tRNA dimethylallyltransferase 2.